Reading from the N-terminus, the 206-residue chain is MELTKIFLAFLCIGVSYSLGSFPSGFIAGKWLKGIDLRKVGSGSTGATNVLRHVGKKAALIVFLIDVSKGIGSILIAKSLFLSPSFHVICGIAALSGHIWPIWLNWKGGKAVATGLGVFLGISWQVGLASLGIFMAVLSSSKIVSLSSISAAISLPILMFLSLQEASFLNAYIIASFAAMIMVLWRHRANLKRLLNGDEPRIGKIN.

Helical transmembrane passes span 6-26 (IFLAFLCIGVSYSLGSFPSGF), 57-77 (KAALIVFLIDVSKGIGSILIA), 86-106 (FHVICGIAALSGHIWPIWLNW), 118-138 (VFLGISWQVGLASLGIFMAVL), 143-163 (IVSLSSISAAISLPILMFLSL), and 165-185 (EASFLNAYIIASFAAMIMVLW).

The protein belongs to the PlsY family. In terms of assembly, probably interacts with PlsX.

The protein resides in the cell inner membrane. It catalyses the reaction an acyl phosphate + sn-glycerol 3-phosphate = a 1-acyl-sn-glycero-3-phosphate + phosphate. It functions in the pathway lipid metabolism; phospholipid metabolism. Its function is as follows. Catalyzes the transfer of an acyl group from acyl-phosphate (acyl-PO(4)) to glycerol-3-phosphate (G3P) to form lysophosphatidic acid (LPA). This enzyme utilizes acyl-phosphate as fatty acyl donor, but not acyl-CoA or acyl-ACP. The chain is Glycerol-3-phosphate acyltransferase from Prochlorococcus marinus (strain MIT 9211).